We begin with the raw amino-acid sequence, 354 residues long: 3-isopropylmalate dehydrogenase (354 aa).

Substrate is bound by residues arginine 96, arginine 106, arginine 132, and aspartate 223. The Mg(2+) site is built by aspartate 223, aspartate 247, and aspartate 251. 283–295 is a binding site for NAD(+); the sequence is GSAPDIAGQGKAD.

It belongs to the isocitrate and isopropylmalate dehydrogenases family. LeuB type 2 subfamily. As to quaternary structure, homodimer. Mg(2+) serves as cofactor. Requires Mn(2+) as cofactor.

The protein resides in the cytoplasm. The catalysed reaction is (2R,3S)-3-isopropylmalate + NAD(+) = 4-methyl-2-oxopentanoate + CO2 + NADH. Its pathway is amino-acid biosynthesis; L-leucine biosynthesis; L-leucine from 3-methyl-2-oxobutanoate: step 3/4. In terms of biological role, catalyzes the oxidation of 3-carboxy-2-hydroxy-4-methylpentanoate (3-isopropylmalate) to 3-carboxy-4-methyl-2-oxopentanoate. The product decarboxylates to 4-methyl-2 oxopentanoate. The sequence is that of 3-isopropylmalate dehydrogenase from Thermobifida fusca (strain YX).